The primary structure comprises 291 residues: Protease HtpX homolog (291 aa).

Helical transmembrane passes span 4–24 (VVLF…SARI) and 38–58 (MGML…ISLL). Histidine 144 is a binding site for Zn(2+). The active site involves glutamate 145. Histidine 148 contacts Zn(2+). 2 helical membrane passes run 152–172 (GDMV…IFLS) and 199–219 (ISSI…VMCF). Residue glutamate 224 coordinates Zn(2+).

Belongs to the peptidase M48B family. Zn(2+) is required as a cofactor.

It is found in the cell inner membrane. The polypeptide is Protease HtpX homolog (Chlorobium limicola (strain DSM 245 / NBRC 103803 / 6330)).